The sequence spans 256 residues: Imidazole glycerol phosphate synthase subunit HisF (256 aa).

Active-site residues include Asp12 and Asp131.

It belongs to the HisA/HisF family. In terms of assembly, heterodimer of HisH and HisF.

It is found in the cytoplasm. The catalysed reaction is 5-[(5-phospho-1-deoxy-D-ribulos-1-ylimino)methylamino]-1-(5-phospho-beta-D-ribosyl)imidazole-4-carboxamide + L-glutamine = D-erythro-1-(imidazol-4-yl)glycerol 3-phosphate + 5-amino-1-(5-phospho-beta-D-ribosyl)imidazole-4-carboxamide + L-glutamate + H(+). It functions in the pathway amino-acid biosynthesis; L-histidine biosynthesis; L-histidine from 5-phospho-alpha-D-ribose 1-diphosphate: step 5/9. IGPS catalyzes the conversion of PRFAR and glutamine to IGP, AICAR and glutamate. The HisF subunit catalyzes the cyclization activity that produces IGP and AICAR from PRFAR using the ammonia provided by the HisH subunit. In Ectopseudomonas mendocina (strain ymp) (Pseudomonas mendocina), this protein is Imidazole glycerol phosphate synthase subunit HisF.